The chain runs to 397 residues: MIIKPKVRGFICTTTHPVGCEANVRRQIAYTQEQGMIANGPKRVLVIGASTGYGLASRIATAFGSGAATIGVFFEKAGSETKTATAGWYNSAAFDKAAKEAGLYAKSVNGDAFSNECRAKVIELIKADLGQIDLVVYSLASPVRKMPETGEVVRSALKPIGETYTTTAIDTNKDQIITATVEPANEEEIQNTITVMGGQDWELWMAALRDAGVLADGAKSVAYSYIGTDLTWPIYWHGTLGRAKEDLDRAATAIRGDLAAKGGTAHVAVLKSVVTQASSAIPVMPLYISMAFKIMKEKGIHEGCMEQVYRMMRTRLYGEELALDEQARIRMDDWELREDVQQTCRDLWPSITTENLSELTDYTGYKQEFLRLFGFGLAEVDYEADVNPDVKFDVVEL.

Residues 48 to 53 (GASTGY), 74 to 75 (FE), 111 to 112 (DA), and 139 to 140 (LA) each bind NAD(+). Tyrosine 225 contributes to the substrate binding site. The Proton donor role is filled by tyrosine 235. Residues lysine 244 and 273 to 275 (VVT) each bind NAD(+).

This sequence belongs to the TER reductase family. As to quaternary structure, monomer.

The catalysed reaction is a 2,3-saturated acyl-[ACP] + NAD(+) = a (2E)-enoyl-[ACP] + NADH + H(+). The protein operates within lipid metabolism; fatty acid biosynthesis. Its activity is regulated as follows. Resistant to triclosan. In terms of biological role, involved in the final reduction of the elongation cycle of fatty acid synthesis (FAS II). Catalyzes the NADH-dependent reduction of the carbon-carbon double bond in the enoyl moiety that is covalently linked to an acyl carrier protein (ACP). This Aeromonas salmonicida (strain A449) protein is Enoyl-[acyl-carrier-protein] reductase [NADH] FabV.